The sequence spans 133 residues: uncharacterized protein (133 aa).

Residues 44 to 79 (VENQLASSKTEEQTLKISKKSNLNPAQKSSTFGLEN) form a disordered region. A compositionally biased stretch (polar residues) spans 63 to 79 (KSNLNPAQKSSTFGLEN).

The protein resides in the plastid. Its subcellular location is the chloroplast. This is an uncharacterized protein from Chlorella vulgaris (Green alga).